Reading from the N-terminus, the 59-residue chain is Large ribosomal subunit protein bL35 (59 aa).

Disordered stretches follow at residues 1–22 and 30–49; these read MKVKSAAKKRFKLTKSGQIKRK and APHKTTKQKRHLRKQGTVSA. Positions 30–43 are enriched in basic residues; it reads APHKTTKQKRHLRK.

It belongs to the bacterial ribosomal protein bL35 family.

The sequence is that of Large ribosomal subunit protein bL35 (rpmI) from Mycoplasma pneumoniae (strain ATCC 29342 / M129 / Subtype 1) (Mycoplasmoides pneumoniae).